The following is a 135-amino-acid chain: MSLYEHVFIARQDLSNAQAEGLIEHFSTVLADNGGKVVDREYWGVKTMAYKINKNRKGHYAFLKSDAPSAAVQEMERLMRLHDDVMRVLTIKVDKHAEGPSIQMQKRDERERGDRGDRSDRGDRGDRGDRGGFRR.

Residues 96–135 (HAEGPSIQMQKRDERERGDRGDRSDRGDRGDRGDRGGFRR) are disordered. Over residues 105–135 (QKRDERERGDRGDRSDRGDRGDRGDRGGFRR) the composition is skewed to basic and acidic residues.

The protein belongs to the bacterial ribosomal protein bS6 family.

Binds together with bS18 to 16S ribosomal RNA. This is Small ribosomal subunit protein bS6 from Cereibacter sphaeroides (strain ATCC 17029 / ATH 2.4.9) (Rhodobacter sphaeroides).